The following is a 147-amino-acid chain: Leghemoglobin (147 aa).

The 146-residue stretch at 2-147 (GFTADQEALV…LASAIKKAMS (146 aa)) folds into the Globin domain. A nitrated tyrosine mark is found at Tyr25 and Tyr30. Ser45 provides a ligand contact to heme b. Phosphoserine is present on Ser45. Residue His62 participates in O2 binding. 3 residues coordinate heme b: Lys65, His94, and Lys97. Tyr135 carries the nitrated tyrosine modification.

It belongs to the plant globin family. As to quaternary structure, monomer. Post-translationally, nitrated in effective nodules and particularly in hypoxic conditions; this mechanism may play a protective role in the symbiosis by buffering toxic peroxynitrite NO(2)(-). Nitration level decrease during nodule senescence. Phosphorylation at Ser-45 disrupts the molecular environment of its porphyrin ring oxygen binding pocket, thus leading to a reduced oxygen consumption and to the delivery of oxygen O(2) to symbiosomes. In terms of tissue distribution, root nodules.

It is found in the cytoplasm. It localises to the cytosol. The protein localises to the nucleus. In terms of biological role, leghemoglobin that reversibly binds oxygen O(2) through a pentacoordinated heme iron. In root nodules, facilitates the diffusion of oxygen to the bacteroids while preventing the bacterial nitrogenase from being inactivated by buffering dioxygen, nitric oxide and carbon monoxide, and promoting the formation of reactive oxygen species (ROS, e.g. H(2)O(2)). This role is essential for symbiotic nitrogen fixation (SNF). The sequence is that of Leghemoglobin (LB3) from Medicago sativa (Alfalfa).